Consider the following 1252-residue polypeptide: Nephrin (1252 aa).

An N-terminal signal peptide occupies residues 1 to 35 (MGAKRVTVRGARTSPIHRMSSLTPLLLMGMLTSGL). Residues 36-1078 (AESPVPTSAP…PGPPRLPLLP (1043 aa)) lie on the Extracellular side of the membrane. Ig-like C2-type domains are found at residues 39–144 (PVPT…VILS), 149–247 (PKVL…ASFT), 256–347 (PPVI…RSIT), 354–448 (PSAI…KSLT), 454–554 (PAQK…TQLV), and 558–649 (PPTN…ETVS). N-linked (GlcNAc...) asparagine glycosylation occurs at Asn54. Cystine bridges form between Cys67-Cys125, Cys174-Cys231, and Cys279-Cys331. Residue Asn370 is glycosylated (N-linked (GlcNAc...) asparagine). The cysteines at positions 375 and 431 are disulfide-linked. Phosphoserine is present on Ser446. The cysteines at positions 479 and 542 are disulfide-linked. N-linked (GlcNAc...) asparagine glycans are attached at residues Asn561, Asn578, Asn591, and Asn722. Cysteines 581 and 637 form a disulfide. 2 consecutive Ig-like C2-type domains span residues 754 to 846 (PTIR…LVRL) and 852 to 953 (PQVD…VSIS). Cystine bridges form between Cys775–Cys830 and Cys877–Cys934. Residues 957 to 1052 (PPLGLKVVSI…IQVSVTTPGP (96 aa)) enclose the Fibronectin type-III domain. The segment at 1043–1067 (IQVSVTTPGPDQAPEDTDHQLPTEL) is disordered. Residues 1079 to 1099 (VLFAVGGLLLLSNASCVGGLL) form a helical membrane-spanning segment. Topologically, residues 1100–1252 (WRRRLRRLAE…LPFELRGHLV (153 aa)) are cytoplasmic. Phosphoserine is present on Ser1112. The segment covering 1113 to 1127 (EKTEAGSEDRIRNEY) has biased composition (basic and acidic residues). Residues 1113 to 1144 (EKTEAGSEDRIRNEYEESQWTGDRDTRSSTVS) are disordered. At Thr1115 the chain carries Phosphothreonine. Position 1119 is a phosphoserine (Ser1119). Tyr1204 carries the post-translational modification Phosphotyrosine; by FYN.

The protein belongs to the immunoglobulin superfamily. In terms of assembly, interacts with NPHS2 and with CD2AP (via C-terminal domain). Self-associates (via the Ig-like domains). Also interacts (via the Ig-like domains) with KIRREL1/NEPH1 and KIRREL2; the interaction with KIRREL1 is dependent on KIRREL1 glycosylation. Interacts with KIRREL3. Interacts with MAGI1 (via PDZ 2 and 3 domains) forming a tripartite complex with IGSF5/JAM4. Interacts with DDN; the interaction is direct. Forms a complex with ACTN4, CASK, IQGAP1, MAGI2, SPTAN1 and SPTBN1. Interacts with phosphatidylinositol 3-kinase regulatory subunit PIK3R1; the interaction is reduced by high glucose levels. In terms of processing, phosphorylated at Tyr-1204 by FYN, leading to the recruitment and activation of phospholipase C-gamma-1/PLCG1. Tyrosine phosphorylation is reduced by high glucose levels. Dephosphorylated by tensin TNS2 which leads to reduced binding of NPHN1 to PIK3R1. In terms of tissue distribution, strongly expressed in the podocytes of kidney glomeruli (at protein level) and at lower levels in the spleen.

The protein localises to the cell membrane. Functionally, seems to play a role in the development or function of the kidney glomerular filtration barrier. Regulates glomerular vascular permeability. May anchor the podocyte slit diaphragm to the actin cytoskeleton. Plays a role in skeletal muscle formation through regulation of myoblast fusion. This chain is Nephrin (Nphs1), found in Rattus norvegicus (Rat).